We begin with the raw amino-acid sequence, 90 residues long: Small ribosomal subunit protein bS20 (90 aa).

The protein belongs to the bacterial ribosomal protein bS20 family.

Functionally, binds directly to 16S ribosomal RNA. This Mesomycoplasma hyopneumoniae (strain 232) (Mycoplasma hyopneumoniae) protein is Small ribosomal subunit protein bS20.